A 123-amino-acid chain; its full sequence is MHLVYIAIFGALGCLSRFMVSGWVYALIGRALPYGTLAVNVIGSLLLGLLMEGGLRSAALPADIRMGITTGFMGGFTTFSTFSYETVRLLEDGSMVAAGANILLNVTVSVVFAGLGIFLARQL.

4 helical membrane passes run 4–24 (VYIAIFGALGCLSRFMVSGWV), 31–51 (ALPYGTLAVNVIGSLLLGLLM), 64–83 (IRMGITTGFMGGFTTFSTFS), and 100–120 (ANILLNVTVSVVFAGLGIFLA). Na(+) contacts are provided by G74 and T77.

Belongs to the fluoride channel Fluc/FEX (TC 1.A.43) family.

Its subcellular location is the cell inner membrane. It carries out the reaction fluoride(in) = fluoride(out). Na(+) is not transported, but it plays an essential structural role and its presence is essential for fluoride channel function. In terms of biological role, fluoride-specific ion channel. Important for reducing fluoride concentration in the cell, thus reducing its toxicity. The protein is Fluoride-specific ion channel FluC of Syntrophotalea carbinolica (strain DSM 2380 / NBRC 103641 / GraBd1) (Pelobacter carbinolicus).